The primary structure comprises 507 residues: Alkyl hydroperoxide reductase subunit F (507 aa).

Position 207–222 (207–222 (DVLIVGGGPASGSAAI)) interacts with FAD. Cys-335 and Cys-338 are disulfide-bonded. NAD(+) is bound at residue 347-361 (DVAVIGGGNSGVEAA). FAD is bound at residue 467–477 (TNVPGIFAAGD).

It belongs to the class-II pyridine nucleotide-disulfide oxidoreductase family. Homodimer. Requires FAD as cofactor.

Functionally, serves to protect the cell against DNA damage by alkyl hydroperoxides. It can use either NADH or NADPH as electron donor for direct reduction of redox dyes or of alkyl hydroperoxides when combined with the AhpC protein. In Staphylococcus epidermidis (strain ATCC 12228 / FDA PCI 1200), this protein is Alkyl hydroperoxide reductase subunit F (ahpF).